We begin with the raw amino-acid sequence, 146 residues long: Putative trafficking protein particle complex subunit TRS31 (146 aa).

This sequence belongs to the TRAPP small subunits family. BET3 subfamily. As to quaternary structure, part of the multisubunit TRAPP (transport protein particle) complex.

The protein localises to the golgi apparatus. It localises to the cis-Golgi network. Its subcellular location is the endoplasmic reticulum. May play a role in vesicular transport from endoplasmic reticulum to Golgi. This is Putative trafficking protein particle complex subunit TRS31 (TRS31) from Encephalitozoon cuniculi (strain GB-M1) (Microsporidian parasite).